Here is a 199-residue protein sequence, read N- to C-terminus: Interleukin-11 (199 aa).

Positions 1–21 are cleaved as a signal peptide; it reads MNCVCRLVLVVLSLWPDTAVA. An important for interaction with IL11RA and for the stimulation of cell proliferation region spans residues 182–190; that stretch reads HLTLDWAVR.

It belongs to the IL-6 superfamily. As to quaternary structure, interacts with IL11RA to associate with IL6ST, giving rise to a multimeric signaling complex.

The protein resides in the secreted. Functionally, cytokine that stimulates the proliferation of hematopoietic stem cells and megakaryocyte progenitor cells and induces megakaryocyte maturation resulting in increased platelet production. Also promotes the proliferation of hepatocytes in response to liver damage. Binding to its receptor formed by IL6ST and IL11RA activates a signaling cascade that promotes cell proliferation. Signaling leads to the activation of intracellular protein kinases and the phosphorylation of STAT3. The interaction with the membrane-bound IL11RA and IL6ST stimulates 'classic signaling', whereas the binding of IL11 and soluble IL11RA to IL6ST stimulates 'trans-signaling'. This Homo sapiens (Human) protein is Interleukin-11.